We begin with the raw amino-acid sequence, 104 residues long: Ribonuclease P protein component 4 (104 aa).

Residues C57, C60, C83, and C86 each coordinate Zn(2+).

It belongs to the eukaryotic/archaeal RNase P protein component 4 family. In terms of assembly, consists of a catalytic RNA component and at least 4-5 protein subunits. Zn(2+) is required as a cofactor.

It is found in the cytoplasm. The enzyme catalyses Endonucleolytic cleavage of RNA, removing 5'-extranucleotides from tRNA precursor.. Its function is as follows. Part of ribonuclease P, a protein complex that generates mature tRNA molecules by cleaving their 5'-ends. The sequence is that of Ribonuclease P protein component 4 from Saccharolobus islandicus (strain M.14.25 / Kamchatka #1) (Sulfolobus islandicus).